The sequence spans 151 residues: Small ribosomal subunit protein uS15 (151 aa).

This sequence belongs to the universal ribosomal protein uS15 family.

This chain is Small ribosomal subunit protein uS15 (RPS13), found in Candida maltosa (Yeast).